The primary structure comprises 427 residues: MSAFVVLGAQWGDEGKGKMTDYLAETADVVVRFQGGNNAGHTVVVGDKEYKLHLVPSGILYEDKINVLGNGVVIDPKALFEEINYLEDLGVKVTKEKLKVSDRAQLIMPYHRILDGLKEKARGKNDIGTTGKGIGPAYTDKAERSGIRVCDLMHKDVFEEKLRQNINDKNELIRLYGGEELDFDKIFEEYNAYADRMRPYVTDISVIIYDEMKKNKNVLFEGAQGSLLDIDYGTYPYVTSSSTVAGGVCTGAGVGPTAITGAVGIAKAYTTRVGKGPFPTELLDEMGEKLREKGHEYGVTTGRARRCGWLDLVILKSTARISGLTSFVVTKIDTLAGFDKIKVCTGYEFDGKVIDYFPASLEDLAKCKPVYEEFDGWDDSIADARSYEELPENAKIYLKKIEEFTDTKISIVSVGPKRDQTIVVGEI.

GTP is bound by residues 12–18 and 40–42; these read GDEGKGK and GHT. D13 (proton acceptor) is an active-site residue. Residues D13 and G40 each contribute to the Mg(2+) site. IMP contacts are provided by residues 13–16, 38–41, T130, R144, Q224, T239, and R303; these read DEGK and NAGH. The active-site Proton donor is H41. 299-305 serves as a coordination point for substrate; sequence VTTGRAR. Residues R305, 331–333, and 413–415 each bind GTP; these read KID and SVG.

Belongs to the adenylosuccinate synthetase family. Homodimer. Mg(2+) serves as cofactor.

The protein resides in the cytoplasm. The catalysed reaction is IMP + L-aspartate + GTP = N(6)-(1,2-dicarboxyethyl)-AMP + GDP + phosphate + 2 H(+). Its pathway is purine metabolism; AMP biosynthesis via de novo pathway; AMP from IMP: step 1/2. Plays an important role in the de novo pathway of purine nucleotide biosynthesis. Catalyzes the first committed step in the biosynthesis of AMP from IMP. This Clostridium novyi (strain NT) protein is Adenylosuccinate synthetase.